The sequence spans 37 residues: Large ribosomal subunit protein bL36 (37 aa).

This sequence belongs to the bacterial ribosomal protein bL36 family.

This chain is Large ribosomal subunit protein bL36, found in Mycobacteroides abscessus (strain ATCC 19977 / DSM 44196 / CCUG 20993 / CIP 104536 / JCM 13569 / NCTC 13031 / TMC 1543 / L948) (Mycobacterium abscessus).